The chain runs to 44 residues: Opistoporin-2 (44 aa).

Expressed by the venom gland.

Its subcellular location is the secreted. The protein resides in the target cell membrane. In terms of biological role, at high concentrations, acts as a pore former in cellular membranes and causes the leakage of the cells. At submicromolar concentrations, degranulates granulocytes and has a weak hemolytic activity against human erythrocytes. Also strongly inhibits the production of superoxide anions. Has a strong antibacterial activity against Gram-negative bacteria but is less active against Gram-positive bacteria. Also has antifungal activity. The protein is Opistoporin-2 of Opistophthalmus carinatus (African yellow leg scorpion).